A 106-amino-acid chain; its full sequence is Colipase A (106 aa).

The N-terminal stretch at 1 to 11 (LLLVALAVAYA) is a signal peptide. Positions 12–16 (VPDPR) are cleaved as a propeptide — enterostatin, activation peptide. Cystine bridges form between C28–C39, C34–C50, C38–C72, C60–C80, and C74–C98. Position 63 (W63) interacts with taurodeoxycholate.

This sequence belongs to the colipase family. In terms of assembly, forms a 1:1 stoichiometric complex with pancreatic lipase. In terms of tissue distribution, expressed by the pancreas.

It is found in the secreted. Its function is as follows. Colipase is a cofactor of pancreatic lipase. It allows the lipase to anchor itself to the lipid-water interface. Without colipase the enzyme is washed off by bile salts, which have an inhibitory effect on the lipase. Enterostatin has a biological activity as a satiety signal. This Equus caballus (Horse) protein is Colipase A (CLPS1).